The chain runs to 367 residues: Acryloyl-CoA reductase electron transfer subunit beta (367 aa).

305–333 (VYVALGISGAIQHKAGMQDSELIIAVNKD) provides a ligand contact to FAD.

Heterohexadecamer; tetramer of tetramers. Each tetramer is composed of 2 alpha (AcrC), a beta (AcrA) and a gamma (AcrB) subunit.

The protein localises to the cytoplasm. Functionally, part of the ETF-acryloyl-CoA reductase complex involved in the pathway of L-alanine fermentation. The electron transfer flavoprotein (ETF) serves as a specific electron acceptor for acryloyl-CoA reductase. The polypeptide is Acryloyl-CoA reductase electron transfer subunit beta (acrA) (Anaerotignum propionicum (Clostridium propionicum)).